We begin with the raw amino-acid sequence, 466 residues long: Methylenomycin A resistance protein (466 aa).

14 helical membrane passes run 16–36, 56–76, 83–103, 113–133, 146–166, 168–188, 203–223, 234–254, 276–296, 305–325, 337–357, 367–387, 409–429, and 434–454; these read ISVL…VTVV, WVVD…GALA, TIYI…AASI, LIQG…LAAS, LWAA…GVLV, LAGW…ALIS, VNII…YALI, VILV…LREI, FIGF…SLFL, FMAG…NLLF, LMFV…VLIS, VLMS…TTVI, IGAL…ATWY, and FAFL…WLFL.

The protein belongs to the major facilitator superfamily. EmrB family.

The protein localises to the cell membrane. In terms of biological role, resistance to the epoxide antibiotic methylenomycin. In Bacillus subtilis (strain 168), this protein is Methylenomycin A resistance protein (mmr).